A 143-amino-acid chain; its full sequence is Hemoglobin subunit alpha (143 aa).

The region spanning 2–143 (SLTARDKSVV…LSAALADKYR (142 aa)) is the Globin domain. His-60 provides a ligand contact to O2. His-89 contributes to the heme b binding site.

It belongs to the globin family. In terms of assembly, heterotetramer of two alpha chains and two beta chains. In terms of tissue distribution, red blood cells.

Its function is as follows. Involved in oxygen transport from gills to the various peripheral tissues. The chain is Hemoglobin subunit alpha (hba) from Salmo salar (Atlantic salmon).